Reading from the N-terminus, the 337-residue chain is Methylthioribose-1-phosphate isomerase (337 aa).

Residues 47–49 (RGA), Arg81, and Gln184 contribute to the substrate site. The Proton donor role is filled by Asp225. 235–236 (NK) contributes to the substrate binding site.

The protein belongs to the eIF-2B alpha/beta/delta subunits family. MtnA subfamily.

It catalyses the reaction 5-(methylsulfanyl)-alpha-D-ribose 1-phosphate = 5-(methylsulfanyl)-D-ribulose 1-phosphate. It functions in the pathway amino-acid biosynthesis; L-methionine biosynthesis via salvage pathway; L-methionine from S-methyl-5-thio-alpha-D-ribose 1-phosphate: step 1/6. In terms of biological role, catalyzes the interconversion of methylthioribose-1-phosphate (MTR-1-P) into methylthioribulose-1-phosphate (MTRu-1-P). The polypeptide is Methylthioribose-1-phosphate isomerase (Parasynechococcus marenigrum (strain WH8102)).